The chain runs to 71 residues: Small ribosomal subunit protein bS21B (71 aa).

Belongs to the bacterial ribosomal protein bS21 family.

This is Small ribosomal subunit protein bS21B from Rhizobium johnstonii (strain DSM 114642 / LMG 32736 / 3841) (Rhizobium leguminosarum bv. viciae).